Here is a 532-residue protein sequence, read N- to C-terminus: uncharacterized protein (532 aa).

The next 6 helical transmembrane spans lie at 7-26, 30-52, 59-77, 87-109, 116-134, and 139-161; these read HSSY…LGRI, GLSL…GVII, FGLV…PGFF, LILI…KYAF, VVGL…AVAI, and SPLA…ILFV. RCK C-terminal domains lie at 179–262 and 263–346; these read LEIE…LIGE and REEG…LLGN. Helical transmembrane passes span 356–376, 386–408, 421–440, 445–467, 474–496, and 506–528; these read FFPI…NISF, LTGG…PIIW, LGLL…NLVA, SGLL…AVIV, INIL…LAAA, and SVAY…QVIS.

This sequence belongs to the AAE transporter (TC 2.A.81) family.

The protein localises to the cell membrane. This is an uncharacterized protein from Bacteroides thetaiotaomicron (strain ATCC 29148 / DSM 2079 / JCM 5827 / CCUG 10774 / NCTC 10582 / VPI-5482 / E50).